The sequence spans 229 residues: Demethylmenaquinone methyltransferase (229 aa).

S-adenosyl-L-methionine-binding positions include Thr58, Asp78, and 100-101; that span reads DA.

It belongs to the class I-like SAM-binding methyltransferase superfamily. MenG/UbiE family.

The catalysed reaction is a 2-demethylmenaquinol + S-adenosyl-L-methionine = a menaquinol + S-adenosyl-L-homocysteine + H(+). The protein operates within quinol/quinone metabolism; menaquinone biosynthesis; menaquinol from 1,4-dihydroxy-2-naphthoate: step 2/2. Methyltransferase required for the conversion of demethylmenaquinol (DMKH2) to menaquinol (MKH2). The polypeptide is Demethylmenaquinone methyltransferase (Thermotoga maritima (strain ATCC 43589 / DSM 3109 / JCM 10099 / NBRC 100826 / MSB8)).